The sequence spans 231 residues: Cytochrome c oxidase assembly factor 7 (231 aa).

Sel1-like repeat units lie at residues 34-66, 68-104, 108-145, 146-182, and 183-218; these read PDGC…DQNE, SESC…NKGG, IDSC…DGNF, AASC…SLGH, and MWGC…DLHR.

Belongs to the hcp beta-lactamase family.

It is found in the mitochondrion intermembrane space. In terms of biological role, may be required for assembly of mitochondrial respiratory chain complexes. The sequence is that of Cytochrome c oxidase assembly factor 7 (coa7) from Xenopus tropicalis (Western clawed frog).